The chain runs to 100 residues: uncharacterized protein (100 aa).

This is an uncharacterized protein from Borreliella burgdorferi (strain ATCC 35210 / DSM 4680 / CIP 102532 / B31) (Borrelia burgdorferi).